The following is a 400-amino-acid chain: Nicotinate phosphoribosyltransferase (400 aa).

H220 carries the post-translational modification Phosphohistidine; by autocatalysis.

This sequence belongs to the NAPRTase family. Post-translationally, transiently phosphorylated on a His residue during the reaction cycle. Phosphorylation strongly increases the affinity for substrates and increases the rate of nicotinate D-ribonucleotide production. Dephosphorylation regenerates the low-affinity form of the enzyme, leading to product release.

It carries out the reaction nicotinate + 5-phospho-alpha-D-ribose 1-diphosphate + ATP + H2O = nicotinate beta-D-ribonucleotide + ADP + phosphate + diphosphate. Its pathway is cofactor biosynthesis; NAD(+) biosynthesis; nicotinate D-ribonucleotide from nicotinate: step 1/1. Its function is as follows. Catalyzes the synthesis of beta-nicotinate D-ribonucleotide from nicotinate and 5-phospho-D-ribose 1-phosphate at the expense of ATP. This chain is Nicotinate phosphoribosyltransferase, found in Salmonella typhimurium (strain LT2 / SGSC1412 / ATCC 700720).